Reading from the N-terminus, the 247-residue chain is 3,4-dihydroxy-2-butanone 4-phosphate synthase (247 aa).

Residues 38-39 (RE), Asp43, 179-183 (RMGQT), and Glu203 each bind D-ribulose 5-phosphate. Glu39 contributes to the Mg(2+) binding site.

This sequence belongs to the DHBP synthase family. As to quaternary structure, homodimer. Mg(2+) is required as a cofactor. Requires Mn(2+) as cofactor.

The catalysed reaction is D-ribulose 5-phosphate = (2S)-2-hydroxy-3-oxobutyl phosphate + formate + H(+). It participates in cofactor biosynthesis; riboflavin biosynthesis; 2-hydroxy-3-oxobutyl phosphate from D-ribulose 5-phosphate: step 1/1. Functionally, catalyzes the conversion of D-ribulose 5-phosphate to formate and 3,4-dihydroxy-2-butanone 4-phosphate. This is 3,4-dihydroxy-2-butanone 4-phosphate synthase from Methanosarcina mazei (strain ATCC BAA-159 / DSM 3647 / Goe1 / Go1 / JCM 11833 / OCM 88) (Methanosarcina frisia).